The chain runs to 353 residues: Guanine nucleotide-binding protein subunit alpha (353 aa).

Glycine 2 carries N-myristoyl glycine lipidation. Cysteine 3 carries the S-palmitoyl cysteine lipid modification. The G-alpha domain occupies 32–353 (NEIKMLLLGA…QENLRLCGLI (322 aa)). Residues 35-48 (KMLLLGAGESGKST) are G1 motif. Residues glutamate 43, serine 44, glycine 45, lysine 46, serine 47, threonine 48, aspartate 150, leucine 175, threonine 181, glycine 203, asparagine 269, lysine 270, aspartate 272, and alanine 325 each coordinate GTP. Serine 47 contributes to the Mg(2+) binding site. Positions 173 to 181 (DVLRSRVKT) are G2 motif. Threonine 181 contributes to the Mg(2+) binding site. The segment at 196-205 (YRMFDVGGQR) is G3 motif. Residues 265–272 (ILFLNKID) form a G4 motif region. The tract at residues 323–328 (TCATDT) is G5 motif.

This sequence belongs to the G-alpha family. G(q) subfamily. In terms of assembly, g proteins are composed of 3 units; alpha, beta and gamma. The alpha chain contains the guanine nucleotide binding site. Requires Mg(2+) as cofactor.

Its function is as follows. Guanine nucleotide-binding proteins (G proteins) are involved as modulators or transducers in various transmembrane signaling systems. Involved in the mating pathway. The chain is Guanine nucleotide-binding protein subunit alpha (CGA1) from Cochliobolus heterostrophus (strain C4 / ATCC 48331 / race T) (Southern corn leaf blight fungus).